A 64-amino-acid chain; its full sequence is Large ribosomal subunit protein bL35 (64 aa).

The tract at residues 1-23 is disordered; that stretch reads MPKMKTHRGAAKRFKKTKNKIKR.

This sequence belongs to the bacterial ribosomal protein bL35 family.

The chain is Large ribosomal subunit protein bL35 from Nitratiruptor sp. (strain SB155-2).